The chain runs to 502 residues: ATP synthase subunit alpha (502 aa).

Position 169–176 (169–176) interacts with ATP; the sequence is GDRQTGKT.

Belongs to the ATPase alpha/beta chains family. As to quaternary structure, F-type ATPases have 2 components, CF(1) - the catalytic core - and CF(0) - the membrane proton channel. CF(1) has five subunits: alpha(3), beta(3), gamma(1), delta(1), epsilon(1). CF(0) has three main subunits: a(1), b(2) and c(9-12). The alpha and beta chains form an alternating ring which encloses part of the gamma chain. CF(1) is attached to CF(0) by a central stalk formed by the gamma and epsilon chains, while a peripheral stalk is formed by the delta and b chains.

Its subcellular location is the cell membrane. It catalyses the reaction ATP + H2O + 4 H(+)(in) = ADP + phosphate + 5 H(+)(out). Its function is as follows. Produces ATP from ADP in the presence of a proton gradient across the membrane. The alpha chain is a regulatory subunit. The chain is ATP synthase subunit alpha from Desulfitobacterium hafniense (strain Y51).